A 334-amino-acid polypeptide reads, in one-letter code: Probable fructose-bisphosphate aldolase class 1 (334 aa).

This sequence belongs to the class I fructose-bisphosphate aldolase family.

It carries out the reaction beta-D-fructose 1,6-bisphosphate = D-glyceraldehyde 3-phosphate + dihydroxyacetone phosphate. Its pathway is carbohydrate degradation; glycolysis; D-glyceraldehyde 3-phosphate and glycerone phosphate from D-glucose: step 4/4. The chain is Probable fructose-bisphosphate aldolase class 1 from Xanthomonas campestris pv. campestris (strain ATCC 33913 / DSM 3586 / NCPPB 528 / LMG 568 / P 25).